A 540-amino-acid chain; its full sequence is Peptide chain release factor 3 (540 aa).

One can recognise a tr-type G domain in the interval 14 to 283; that stretch reads ELRRNFAIIS…YFLNYALKPG (270 aa). GTP contacts are provided by residues 23–30, 91–95, and 145–148; these read SHPDAGKT, DTPGH, and NKLD.

Belongs to the TRAFAC class translation factor GTPase superfamily. Classic translation factor GTPase family. PrfC subfamily.

The protein resides in the cytoplasm. Functionally, increases the formation of ribosomal termination complexes and stimulates activities of RF-1 and RF-2. It binds guanine nucleotides and has strong preference for UGA stop codons. It may interact directly with the ribosome. The stimulation of RF-1 and RF-2 is significantly reduced by GTP and GDP, but not by GMP. The protein is Peptide chain release factor 3 of Trichormus variabilis (strain ATCC 29413 / PCC 7937) (Anabaena variabilis).